Reading from the N-terminus, the 260-residue chain is MDANTKTILFFVVFFIDLFSPNILFVYAREIGNKPLFTYKQKTEKGPAEWGKLDPQWKVCSTGKIQSPIDLTDERVSLIHDQALSKHYKPASAVIQSRGHDVMVSWKGDGGKITIHQTDYKLVQCHWHSPSEHTINGTSYDLELHMVHTSASGKTTVVGVLYKLGEPDEFLTKILNGIKGVGKKEIDLGIVDPRDIRFETNNFYRYIGSLTIPPCTEGVIWTVQKRVLYFFCFCYRLIIFVTPYINIFWIFVFVFWCMLM.

The signal sequence occupies residues 1–28 (MDANTKTILFFVVFFIDLFSPNILFVYA). Residues 35–260 (PLFTYKQKTE…FVFVFWCMLM (226 aa)) form the Alpha-carbonic anhydrase domain. C60 and C215 form a disulfide bridge. H100 serves as the catalytic Proton acceptor. 2 residues coordinate Zn(2+): H126 and H128. An N-linked (GlcNAc...) asparagine glycan is attached at N136. H145 serves as a coordination point for Zn(2+). Residue 211–212 (TI) coordinates substrate.

This sequence belongs to the alpha-class carbonic anhydrase family. Requires Zn(2+) as cofactor. N-glycosylated.

It is found in the plastid. It localises to the chloroplast stroma. It carries out the reaction hydrogencarbonate + H(+) = CO2 + H2O. Reversible hydration of carbon dioxide. This chain is Alpha carbonic anhydrase 6 (ACA6), found in Arabidopsis thaliana (Mouse-ear cress).